Here is a 346-residue protein sequence, read N- to C-terminus: 4-hydroxy-2-oxohexanoate aldolase (346 aa).

The Pyruvate carboxyltransferase domain occupies 7–259 (VRITDTSLRD…KTGIDFFDIA (253 aa)). 15–16 (RD) provides a ligand contact to substrate. Asp-16 is a binding site for Mn(2+). The active-site Proton acceptor is His-19. Substrate is bound by residues Ser-169 and His-198. Mn(2+) is bound by residues His-198 and His-200. Tyr-289 lines the substrate pocket.

It belongs to the 4-hydroxy-2-oxovalerate aldolase family. Homodimer. Forms a heterotetramer composed of two aldolase (HsaF) and two dehydrogenase (HsaG) subunits. Requires Mn(2+) as cofactor.

It carries out the reaction (S)-4-hydroxy-2-oxohexanoate = propanal + pyruvate. The catalysed reaction is (S)-4-hydroxy-2-oxopentanoate = acetaldehyde + pyruvate. Involved in cholesterol degradation. Catalyzes the retro-aldol cleavage of 4-hydroxy-2-oxohexanoate (HOHA) to pyruvate and propanal. Can also catalyze the cleavage of 4-hydroxy-2-oxopentanoate (HOPA) to pyruvate and acetaldehyde. The aldehydes produced by this reaction are directly channeled to the dehydrogenase HsaG. This is 4-hydroxy-2-oxohexanoate aldolase from Mycobacterium bovis (strain ATCC BAA-935 / AF2122/97).